We begin with the raw amino-acid sequence, 451 residues long: Methionine aminopeptidase 2-2 (451 aa).

The interval 1 to 101 (MAAKVADDVA…IDEVFPNDSY (101 aa)) is disordered. Residues 37–51 (EHEDSDDDNEAEEGA) show a composition bias toward acidic residues. The span at 60–73 (KKKKKRKPRKKKKA) shows a compositional bias: basic residues. Histidine 204 serves as a coordination point for substrate. A divalent metal cation is bound by residues aspartate 224, aspartate 235, and histidine 304. Residue histidine 312 participates in substrate binding. 2 residues coordinate a divalent metal cation: glutamate 337 and glutamate 432.

This sequence belongs to the peptidase M24A family. Methionine aminopeptidase eukaryotic type 2 subfamily. It depends on Co(2+) as a cofactor. Requires Zn(2+) as cofactor. Mn(2+) serves as cofactor. Fe(2+) is required as a cofactor.

The protein localises to the cytoplasm. It catalyses the reaction Release of N-terminal amino acids, preferentially methionine, from peptides and arylamides.. Cotranslationally removes the N-terminal methionine from nascent proteins. The N-terminal methionine is often cleaved when the second residue in the primary sequence is small and uncharged (Met-Ala-, Cys, Gly, Pro, Ser, Thr, or Val). This Pyrenophora tritici-repentis (strain Pt-1C-BFP) (Wheat tan spot fungus) protein is Methionine aminopeptidase 2-2.